Reading from the N-terminus, the 96-residue chain is Large ribosomal subunit protein eL21 (96 aa).

The tract at residues 1–66 (MPSSNGPLEG…FDGQTGTVEG (66 aa)) is disordered.

Belongs to the eukaryotic ribosomal protein eL21 family. As to quaternary structure, part of the 50S ribosomal subunit. Interacts with protein L18 and binds the 5S rRNA. Has been cross-linked to L18.

Functionally, this is one of 5 proteins that mediate the attachment of the 5S rRNA onto the large ribosomal subunit, stabilizing the orientation of adjacent RNA domains. The chain is Large ribosomal subunit protein eL21 (rpl21e) from Haloarcula marismortui (strain ATCC 43049 / DSM 3752 / JCM 8966 / VKM B-1809) (Halobacterium marismortui).